The chain runs to 594 residues: Shugoshin (594 aa).

A coiled-coil region spans residues 38–61; the sequence is KITDMETKVSELVQENVSLRSRLS. Disordered regions lie at residues 104–178, 201–266, 342–380, and 519–549; these read SGIH…KSSR, QLPI…TNKN, SKIK…RRTR, and TKQQ…RTKQ. Residues 220 to 240 adopt a coiled-coil conformation; that stretch reads EEESQENKHTKEEREDEGKEN. Over residues 224-239 the composition is skewed to basic and acidic residues; it reads QENKHTKEEREDEGKE. The segment covering 252-261 has biased composition (polar residues); it reads SVTNTGTECS. Residues 343–355 show a composition bias toward basic residues; it reads KIKHSMKHPRTKL. Basic and acidic residues predominate over residues 357-376; sequence GGQDDIMPHTDYDKDDEKRE. Polar residues-rich tracts occupy residues 519 to 532 and 539 to 549; these read TKQQ…SDPN and NSNVKPTRTKQ.

This sequence belongs to the shugoshin family.

The protein resides in the nucleus. It localises to the chromosome. It is found in the centromere. In terms of biological role, plays a central role in chromosome cohesion during cell division by preventing premature dissociation of cohesin complex from centromeres after prophase, when most of cohesin complex dissociates from chromosomes arms. In Kluyveromyces lactis (strain ATCC 8585 / CBS 2359 / DSM 70799 / NBRC 1267 / NRRL Y-1140 / WM37) (Yeast), this protein is Shugoshin (SGO1).